The sequence spans 197 residues: Small ribosomal subunit protein uS4 (197 aa).

Residues 87 to 147 form the S4 RNA-binding domain; it reads SRIDNVIFRL…ESKKNTQRMK (61 aa).

It belongs to the universal ribosomal protein uS4 family. In terms of assembly, part of the 30S ribosomal subunit. Contacts protein S5. The interaction surface between S4 and S5 is involved in control of translational fidelity.

In terms of biological role, one of the primary rRNA binding proteins, it binds directly to 16S rRNA where it nucleates assembly of the body of the 30S subunit. Its function is as follows. With S5 and S12 plays an important role in translational accuracy. The sequence is that of Small ribosomal subunit protein uS4 from Agathobacter rectalis (strain ATCC 33656 / DSM 3377 / JCM 17463 / KCTC 5835 / VPI 0990) (Eubacterium rectale).